Consider the following 187-residue polypeptide: Large ribosomal subunit protein uL22 (187 aa).

The span at 159 to 171 shows a compositional bias: basic and acidic residues; that stretch reads VSKPTDDAAPKVK. The tract at residues 159–187 is disordered; that stretch reads VSKPTDDAAPKVKKESKRKQRRQLARGEF. A compositionally biased stretch (basic residues) spans 172–187; sequence KESKRKQRRQLARGEF.

This sequence belongs to the universal ribosomal protein uL22 family.

This chain is Large ribosomal subunit protein uL22 (rpl-17), found in Caenorhabditis elegans.